Reading from the N-terminus, the 928-residue chain is MKIKDTLNMGKTSFPMRAGLPKNESIWQKKWDEDHVYEQRQKLNEGKPTFMLHDGPPFANGNIHMGHALNKISKDIIVRYKSMNGFRAPYVPGWDTHGLPIEQQLAKQGVKRKEMSMTDYRELCRQFAMQEIDKQRTDFKRLGVMGDWEHPYITLQHHYEASEIRVFGAMAKKGYIYHGLKPVYWSWSSESTLAEAEIEYHDDKSPSIYVAFKVVDGKGLLDTDTYLVIWTTTPWTIPANYGITVNPRFDYVQVQVGDKKYVVAAELLDRVAEEIGWENPKILKTFKGTDMDKMTAQHPLYDRTSLVMNADHVTLDAGTGLVHTAPGHGEDDYKVGVKYGLPVVSVVDAKGYMNEYAPGFEGVFYDDANKQITQALADKGALLKLDFFTHSYPHDWRTKKPVIFRATTQWFASIDAFRDQILKAIDTVDFKPSWGKTRLYNMIRDRGDWVISRQRAWGVPLPIFYAEDGEPIIEEETINHVADLFGKYGSNVWFEREAKDLLPEGYTNPHSPNGQFTKEKDIMDVWFDSGSSHQAVLAARPELSFPADLYLEGSDQYRGWFNSSLITSVAATGVAPYRGILSQGFTLDGKGRKMSKSLGNTIVPATIEKQFGAEIIRLWVATVDSSSDVRVSVDNFAQTSEAYRKIRNTMRFMVANTGDFDPEKDTVAYDELGSVDRYMMVRLNQIIKQVKTAYDAYDFATVEKTISSFLVNDLSAFYLDVAKDVVYIEAKDDPKRRGMQTVMFAALLALTKLITPILPHTAEEVWPYLKQPEAYAALADMPEAEQFDDESQLLDIWSGFMDFRSEVQKALELARDNKVIGKSLEAAVTVYPSEPVRDMLDDVDANVMQLLITSHFEIAPATTQAPANAEQFDDMAVVVKHADGEVCPRCRMVRTDIGTDPKLPQLCSRCAAIVEANFPDAVTNGFDK.

The 'HIGH' region signature appears at 57 to 67; sequence PFANGNIHMGH. Glutamate 552 contacts L-isoleucyl-5'-AMP. The 'KMSKS' region motif lies at 593–597; the sequence is KMSKS. An ATP-binding site is contributed by lysine 596. Residues cysteine 887, cysteine 890, cysteine 907, and cysteine 910 each contribute to the Zn(2+) site.

It belongs to the class-I aminoacyl-tRNA synthetase family. IleS type 1 subfamily. In terms of assembly, monomer. It depends on Zn(2+) as a cofactor.

It is found in the cytoplasm. It catalyses the reaction tRNA(Ile) + L-isoleucine + ATP = L-isoleucyl-tRNA(Ile) + AMP + diphosphate. Catalyzes the attachment of isoleucine to tRNA(Ile). As IleRS can inadvertently accommodate and process structurally similar amino acids such as valine, to avoid such errors it has two additional distinct tRNA(Ile)-dependent editing activities. One activity is designated as 'pretransfer' editing and involves the hydrolysis of activated Val-AMP. The other activity is designated 'posttransfer' editing and involves deacylation of mischarged Val-tRNA(Ile). The sequence is that of Isoleucine--tRNA ligase from Lacticaseibacillus paracasei (strain ATCC 334 / BCRC 17002 / CCUG 31169 / CIP 107868 / KCTC 3260 / NRRL B-441) (Lactobacillus paracasei).